We begin with the raw amino-acid sequence, 211 residues long: Uracil phosphoribosyltransferase (211 aa).

5-phospho-alpha-D-ribose 1-diphosphate contacts are provided by residues Arg78, Arg103, and Asp130 to Ser138. Residues Ile193 and Gly198–Ala200 each bind uracil. Asp199 is a 5-phospho-alpha-D-ribose 1-diphosphate binding site.

Belongs to the UPRTase family. It depends on Mg(2+) as a cofactor.

The catalysed reaction is UMP + diphosphate = 5-phospho-alpha-D-ribose 1-diphosphate + uracil. It participates in pyrimidine metabolism; UMP biosynthesis via salvage pathway; UMP from uracil: step 1/1. Its activity is regulated as follows. Allosterically activated by GTP. Catalyzes the conversion of uracil and 5-phospho-alpha-D-ribose 1-diphosphate (PRPP) to UMP and diphosphate. This chain is Uracil phosphoribosyltransferase, found in Acinetobacter baumannii (strain ATCC 17978 / DSM 105126 / CIP 53.77 / LMG 1025 / NCDC KC755 / 5377).